Consider the following 579-residue polypeptide: uncharacterized protein (579 aa).

Residues methionine 1–glutamate 100 form a disordered region. A compositionally biased stretch (polar residues) spans glycine 80–serine 90. 11 helical membrane-spanning segments follow: residues phenylalanine 148–serine 168, valine 175–proline 195, valine 206–tyrosine 226, glycine 228–leucine 248, valine 279–valine 299, leucine 303–leucine 323, leucine 378–valine 398, tryptophan 407–glycine 427, isoleucine 448–isoleucine 468, serine 504–threonine 524, and leucine 526–valine 546.

It to M.tuberculosis Rv0876c.

It localises to the cell membrane. This is an uncharacterized protein from Mycobacterium leprae (strain TN).